The sequence spans 144 residues: Transmembrane protein 170A (144 aa).

Residues 1 to 50 lie on the Extracellular side of the membrane; sequence MEREGSGGGGGSAGLLQQILSLKLVPRVGNGTLCPNSTSLCSFPEMWYGV. N30 and N36 each carry an N-linked (GlcNAc...) asparagine glycan. A helical transmembrane segment spans residues 51 to 71; that stretch reads FLWALMSSVFFHVPAGLLALF. At 72 to 85 the chain is on the cytoplasmic side; it reads TLRHHKYGRFMSVS. The helical transmembrane segment at 86–106 threads the bilayer; the sequence is ILLMGIVGPITAGILTSAAIA. Over 107-116 the chain is Extracellular; it reads GVYRAAGKEM. A helical transmembrane segment spans residues 117-137; it reads IPFEALTLGTGQTFCVVVVSF. The Cytoplasmic portion of the chain corresponds to 138–144; it reads LRVLATL.

The protein belongs to the TMEM170 family. Interacts with RTN4.

It localises to the endoplasmic reticulum membrane. Its subcellular location is the nucleus envelope. Functionally, acts as a regulator of endoplasmic reticulum (ER) and nuclear envelope (NE) morphogenesis. Affects the ratio between tubular ER and ER sheets by promoting sheet formation at the expense of tubules. Influences NE expansion, nuclear pore complex formation and proper localization of inner nuclear membrane proteins. The protein is Transmembrane protein 170A (Tmem170a) of Mus musculus (Mouse).